We begin with the raw amino-acid sequence, 140 residues long: Ribosome-binding factor A (140 aa).

The segment at 115-140 (EDERQQRGDIPPGSDQQPGSDEQPTG) is disordered. The segment covering 128 to 140 (SDQQPGSDEQPTG) has biased composition (polar residues).

The protein belongs to the RbfA family. Monomer. Binds 30S ribosomal subunits, but not 50S ribosomal subunits or 70S ribosomes.

It localises to the cytoplasm. Functionally, one of several proteins that assist in the late maturation steps of the functional core of the 30S ribosomal subunit. Associates with free 30S ribosomal subunits (but not with 30S subunits that are part of 70S ribosomes or polysomes). Required for efficient processing of 16S rRNA. May interact with the 5'-terminal helix region of 16S rRNA. This Synechococcus sp. (strain CC9605) protein is Ribosome-binding factor A.